Here is a 132-residue protein sequence, read N- to C-terminus: Fatty acid-binding protein, intestinal (132 aa).

A2 is subject to N-acetylalanine. Hexadecanoate contacts are provided by W83 and R107. Tetradecanoate is bound by residues W83 and R107.

The protein belongs to the calycin superfamily. Fatty-acid binding protein (FABP) family.

Its subcellular location is the cytoplasm. In terms of biological role, FABPs are thought to play a role in the intracellular transport of long-chain fatty acids and their acyl-CoA esters. FABP2 is probably involved in triglyceride-rich lipoprotein synthesis. Binds saturated long-chain fatty acids with a high affinity, but binds with a lower affinity to unsaturated long-chain fatty acids. FABP2 may also help maintain energy homeostasis by functioning as a lipid sensor. The chain is Fatty acid-binding protein, intestinal (FABP2) from Bos taurus (Bovine).